The following is a 355-amino-acid chain: Probable dual-specificity RNA methyltransferase RlmN (355 aa).

E92 acts as the Proton acceptor in catalysis. Residues 98–330 enclose the Radical SAM core domain; the sequence is FHYGLSVCVT…TELGINCGVR (233 aa). C105 and C341 form a disulfide bridge. 3 residues coordinate [4Fe-4S] cluster: C112, C116, and C119. Residues 164–165, S196, 219–221, and N297 contribute to the S-adenosyl-L-methionine site; these read GE and SLH. Residue C341 is the S-methylcysteine intermediate of the active site.

It belongs to the radical SAM superfamily. RlmN family. Requires [4Fe-4S] cluster as cofactor.

The protein localises to the cytoplasm. It carries out the reaction adenosine(2503) in 23S rRNA + 2 reduced [2Fe-2S]-[ferredoxin] + 2 S-adenosyl-L-methionine = 2-methyladenosine(2503) in 23S rRNA + 5'-deoxyadenosine + L-methionine + 2 oxidized [2Fe-2S]-[ferredoxin] + S-adenosyl-L-homocysteine. It catalyses the reaction adenosine(37) in tRNA + 2 reduced [2Fe-2S]-[ferredoxin] + 2 S-adenosyl-L-methionine = 2-methyladenosine(37) in tRNA + 5'-deoxyadenosine + L-methionine + 2 oxidized [2Fe-2S]-[ferredoxin] + S-adenosyl-L-homocysteine. Functionally, specifically methylates position 2 of adenine 2503 in 23S rRNA and position 2 of adenine 37 in tRNAs. The protein is Probable dual-specificity RNA methyltransferase RlmN of Oceanobacillus iheyensis (strain DSM 14371 / CIP 107618 / JCM 11309 / KCTC 3954 / HTE831).